The sequence spans 335 residues: Probable cyclin-H (335 aa).

It belongs to the cyclin family. Cyclin C subfamily.

Its subcellular location is the nucleus. Its function is as follows. Regulates CDK7, the catalytic subunit of the CDK-activating kinase (CAK) enzymatic complex. The chain is Probable cyclin-H (CYCH) from Echinococcus multilocularis (Fox tapeworm).